The primary structure comprises 309 residues: Homoserine O-acetyltransferase (309 aa).

Residue C142 is the Acyl-thioester intermediate of the active site. 2 residues coordinate substrate: K163 and S192. H235 acts as the Proton acceptor in catalysis. E237 is an active-site residue. Residue R249 coordinates substrate.

Belongs to the MetA family.

The protein resides in the cytoplasm. The catalysed reaction is L-homoserine + acetyl-CoA = O-acetyl-L-homoserine + CoA. Its pathway is amino-acid biosynthesis; L-methionine biosynthesis via de novo pathway; O-acetyl-L-homoserine from L-homoserine: step 1/1. Transfers an acetyl group from acetyl-CoA to L-homoserine, forming acetyl-L-homoserine. The protein is Homoserine O-acetyltransferase of Methanomethylophilus alvi (strain Mx1201).